Consider the following 852-residue polypeptide: Protein SEY1 (852 aa).

The Cytoplasmic segment spans residues 1–738 (MNGHFAAIGN…KRSAIGGITQ (738 aa)). The 248-residue stretch at 47–294 (GFNYHLISVF…IPADGLSVYA (248 aa)) folds into the GB1/RHD3-type G domain. A GTP-binding site is contributed by 57–64 (GSQSTGKS). The stretch at 475-500 (QYKLFEKELDEVSARLRKEEMRRLAI) forms a coiled coil. Residues 739–759 (VPLYFYVILLILGWNEILMVL) form a helical membrane-spanning segment. Topologically, residues 760-762 (RNP) are lumenal. The helical transmembrane segment at 763 to 783 (FLILLILVMGGGTYIAYSLNL) threads the bilayer. The Cytoplasmic portion of the chain corresponds to 784-852 (LGPMMQMSNA…AQDISDDDDI (69 aa)).

Belongs to the TRAFAC class dynamin-like GTPase superfamily. GB1/RHD3 GTPase family. RHD3 subfamily.

The protein resides in the endoplasmic reticulum membrane. In terms of biological role, cooperates with the reticulon proteins and tubule-shaping DP1 family proteins to generate and maintain the structure of the tubular endoplasmic reticulum network. Has GTPase activity, which is required for its function in ER organization. The sequence is that of Protein SEY1 from Podospora anserina (strain S / ATCC MYA-4624 / DSM 980 / FGSC 10383) (Pleurage anserina).